We begin with the raw amino-acid sequence, 538 residues long: Adenine deaminase (538 aa).

The protein belongs to the metallo-dependent hydrolases superfamily. Adenine deaminase family. Mn(2+) is required as a cofactor.

It catalyses the reaction adenine + H2O + H(+) = hypoxanthine + NH4(+). The sequence is that of Adenine deaminase from Methanothermobacter thermautotrophicus (strain ATCC 29096 / DSM 1053 / JCM 10044 / NBRC 100330 / Delta H) (Methanobacterium thermoautotrophicum).